We begin with the raw amino-acid sequence, 545 residues long: Chaperonin GroEL (545 aa).

ATP is bound by residues 30–33 (TLGP), Lys-51, 87–91 (DGTTT), Gly-415, and Asp-495.

The protein belongs to the chaperonin (HSP60) family. Forms a cylinder of 14 subunits composed of two heptameric rings stacked back-to-back. Interacts with the co-chaperonin GroES.

Its subcellular location is the cytoplasm. The enzyme catalyses ATP + H2O + a folded polypeptide = ADP + phosphate + an unfolded polypeptide.. Together with its co-chaperonin GroES, plays an essential role in assisting protein folding. The GroEL-GroES system forms a nano-cage that allows encapsulation of the non-native substrate proteins and provides a physical environment optimized to promote and accelerate protein folding. The chain is Chaperonin GroEL from Shewanella baltica (strain OS185).